The sequence spans 230 residues: Cysteine S-methyltransferase OspZ (230 aa).

Residues 49–52 (GITR) are interaction with host proteins TAB2, TAB3 and ZRANB3. S-adenosyl-L-methionine is bound by residues A92, S98, R107, Q111, Y204, and E208.

This sequence belongs to the NleE/OspZ family. As to quaternary structure, monomer.

Its subcellular location is the secreted. It localises to the host cytoplasm. The protein resides in the host nucleus. The enzyme catalyses L-cysteinyl-[protein] + S-adenosyl-L-methionine = S-methyl-L-cysteinyl-[protein] + S-adenosyl-L-homocysteine + H(+). Cysteine methyltransferase effector that inhibits host cell NF-kappa-B activation by preventing nuclear translocation of host protein RELA/p65. Acts by mediating cysteine methylation of host proteins TAB2 and TAB3: methylation of a conserved cysteine residue of the RanBP2-type zinc finger (NZF) of TAB2 and TAB3 disrupts zinc-binding, thereby inactivating the ubiquitin chain-binding activity of TAB2 and TAB3, leading to NF-kappa-B inactivation. Also mediates cysteine methylation of host protein ZRANB3, inactivating its ability to bind ubiquitin chains. This chain is Cysteine S-methyltransferase OspZ, found in Shigella boydii.